A 485-amino-acid chain; its full sequence is Skb1 localization factor 1 (485 aa).

The tract at residues M1–T200 is sufficient for interaction with Skb1. Disordered regions lie at residues N117–N230, E286–S416, and T446–K466. The span at S171–L182 shows a compositional bias: polar residues. The span at R189 to P198 shows a compositional bias: basic and acidic residues. Composition is skewed to polar residues over residues G218 to N230 and V341 to S363. S222 is subject to Phosphoserine. The segment covering S371–R393 has biased composition (basic and acidic residues). The span at Y394–S416 shows a compositional bias: polar residues. Residues T447 to P464 show a composition bias toward basic and acidic residues. The interval K451 to D485 is required and sufficient for plasma membrane anchoring; lysine-rich, may bind to anionic lipids in the plasma membrane. S458 bears the Phosphoserine mark.

As to quaternary structure, interacts with Skb1.

It localises to the cell membrane. Functionally, acts as a membrane anchor for Skb1 in forming plasma membrane microdomains. Promotes mitotic entry by sequestering mitotic inhibitor Skb1 from its regulatory targets Cdr1 and Wee1. The chain is Skb1 localization factor 1 from Schizosaccharomyces pombe (strain 972 / ATCC 24843) (Fission yeast).